Here is a 305-residue protein sequence, read N- to C-terminus: ATP synthase subunit gamma, mitochondrial (305 aa).

It belongs to the ATPase gamma chain family. F-type ATPases have 2 components, F(1) - the catalytic core - and F(o) - the membrane proton channel. F(1) has five subunits: alpha(3), beta(3), gamma(1), delta(1), epsilon(1), plus the additional subunit P18 (Tb427.05.1710) that is not present in F(1)F(o) ATP synthase from metazoa. Subunit P18 (Tb927.5.1710) interacts with the alpha subunit with a 1:1 stoichiometry; the interaction is direct. Subunit gamma is part of the central stalk. F(o) has three main subunits: a, b and c. The trypanosomal ATPase complex contains additional subunits that are not present in the F(1)F(o) ATP synthase from metazoa.

It localises to the mitochondrion. It is found in the mitochondrion inner membrane. Functionally, mitochondrial membrane ATP synthase (F(1)F(o) ATP synthase) produces ATP from ADP in the presence of a proton gradient across the membrane which is generated by electron transport complexes of the respiratory chain. F-type ATPases consist of two structural domains, F(1) - containing the extramembraneous catalytic core, and F(o) - containing the membrane proton channel, linked together by a central stalk and a peripheral stalk. During catalysis, ATP synthesis in the catalytic domain of F(1) is coupled via a rotary mechanism of the central stalk subunits to proton translocation. Subunits alpha and beta form the catalytic core in F(1). Rotation of the central stalk against the surrounding alpha(3)beta(3) subunits leads to hydrolysis of ATP in three separate catalytic sites on the beta subunits. Contrary to the procyclic, insect form that requires F(1)F(o) ATP synthase for ATP synthesis, the bloodstream form relies on ATP hydrolysis by F(1)F(o) ATP synthase to maintain its mitochondrial membrane potential. This chain is ATP synthase subunit gamma, mitochondrial, found in Trypanosoma brucei brucei.